The chain runs to 160 residues: Calcium-binding protein CP1 (160 aa).

EF-hand domains lie at A22–G49, N52–S87, and G93–A128. D27, D29, D31, K33, D38, D65, N67, D69, E76, D106, D108, D110, R112, and D117 together coordinate Ca(2+).

In terms of tissue distribution, expressed in roots and flowers.

It localises to the cytoplasm. The protein resides in the cytosol. Its function is as follows. Binds calcium in vitro. The sequence is that of Calcium-binding protein CP1 from Arabidopsis thaliana (Mouse-ear cress).